Reading from the N-terminus, the 624-residue chain is Membrane protein insertase YidC (624 aa).

The helical transmembrane segment at 8–28 threads the bilayer; that stretch reads MIIAIALSLAVLLGWNYFVTA. A disordered region spans residues 36-95; the sequence is QQQAAQVNPSQGVNPSQGVDPSQGVNASPSPKEGGPSAPVPGTLPGAAGGSPQAALARDE. Over residues 43–64 the composition is skewed to polar residues; the sequence is NPSQGVNPSQGVDPSQGVNASP. Transmembrane regions (helical) follow at residues 370–390, 396–416, 470–490, 526–542, and 559–579; these read FDLLIDWGWFYFITKPMFKAL, LFGNFGVSILVVTLILKLFFL, WPVLIQIPVFFSLYKVLFVTI, LLHLGVWPIVMGITMFL, and FTFMPIIFTFMLGSFPAGLVI.

This sequence belongs to the OXA1/ALB3/YidC family. Type 1 subfamily. As to quaternary structure, interacts with the Sec translocase complex via SecD. Specifically interacts with transmembrane segments of nascent integral membrane proteins during membrane integration.

The protein resides in the cell inner membrane. Its function is as follows. Required for the insertion and/or proper folding and/or complex formation of integral membrane proteins into the membrane. Involved in integration of membrane proteins that insert both dependently and independently of the Sec translocase complex, as well as at least some lipoproteins. Aids folding of multispanning membrane proteins. This chain is Membrane protein insertase YidC, found in Methylobacterium sp. (strain 4-46).